The chain runs to 65 residues: Putative beta-neurotoxin RjAa7 (65 aa).

Positions 1 to 64 constitute an LCN-type CS-alpha/beta domain; that stretch reads KEGYPVGRDG…VWDSSTNKCG (64 aa). Intrachain disulfides connect Cys11–Cys63, Cys15–Cys37, Cys22–Cys44, and Cys26–Cys46.

Belongs to the long (4 C-C) scorpion toxin superfamily. Sodium channel inhibitor family. Beta subfamily. Expressed by the venom gland.

It localises to the secreted. In terms of biological role, beta toxins bind voltage-independently at site-4 of sodium channels (Nav) and shift the voltage of activation toward more negative potentials thereby affecting sodium channel activation and promoting spontaneous and repetitive firing. This is Putative beta-neurotoxin RjAa7 from Rhopalurus junceus (Caribbean blue scorpion).